The following is a 1463-amino-acid chain: DNA polymerase III PolC-type (1463 aa).

Positions 425-581 (YVVFDVETTG…YDAEATGRLL (157 aa)) constitute an Exonuclease domain.

Belongs to the DNA polymerase type-C family. PolC subfamily.

It is found in the cytoplasm. It catalyses the reaction DNA(n) + a 2'-deoxyribonucleoside 5'-triphosphate = DNA(n+1) + diphosphate. Required for replicative DNA synthesis. This DNA polymerase also exhibits 3' to 5' exonuclease activity. The polypeptide is DNA polymerase III PolC-type (Streptococcus pneumoniae serotype 2 (strain D39 / NCTC 7466)).